A 217-amino-acid polypeptide reads, in one-letter code: MSNTTIGKFITFEGNEGSGKTTQSKLLYEKLLDNGIKAVWTREIGGTDIAELIRDIVLFKDMSITTELLLIMAARYEHIEKFIRPNLNEGKWVICDRFIDSTLCYQSENSEEQQLILELHRKLLDNFFPDLTLIINVSPSIAMQRIKIREIHKNTNQLNKFDSRNQQFHQKITDAFIQVSKLFPERIVQINGEPMIEDVSSEVINIINNKMKVNLLR.

14 to 21 (GNEGSGKT) is an ATP binding site.

Belongs to the thymidylate kinase family.

The enzyme catalyses dTMP + ATP = dTDP + ADP. In terms of biological role, phosphorylation of dTMP to form dTDP in both de novo and salvage pathways of dTTP synthesis. In Orientia tsutsugamushi (strain Ikeda) (Rickettsia tsutsugamushi), this protein is Thymidylate kinase.